The sequence spans 287 residues: Inorganic pyrophosphatase (287 aa).

Residue R79 coordinates diphosphate. Residues D116, D121, and D153 each contribute to the Mg(2+) site.

Belongs to the PPase family. Mg(2+) serves as cofactor.

The protein localises to the cytoplasm. It carries out the reaction diphosphate + H2O = 2 phosphate + H(+). The protein is Inorganic pyrophosphatase (IPP1) of Candida glabrata (strain ATCC 2001 / BCRC 20586 / JCM 3761 / NBRC 0622 / NRRL Y-65 / CBS 138) (Yeast).